The following is a 370-amino-acid chain: Phosphate-binding protein PstS 2 (370 aa).

Residues 1-22 (MKFARSGAAVSLLAAGTLVLTA) form the signal peptide. Cys-23 is lipidated: N-palmitoyl cysteine. Cys-23 carries S-diacylglycerol cysteine lipidation. Phosphate is bound by residues 54-56 (STA), Ser-84, Asp-102, and 191-193 (SGT).

It belongs to the PstS family. The complex is composed of two ATP-binding proteins (PstB), two transmembrane proteins (PstC and PstA) and a solute-binding protein (PstS).

The protein localises to the cell membrane. In terms of biological role, functions in inorganic phosphate uptake, although probably not the main uptake protein under phosphate starvation. Part of the ABC transporter complex PstSACB involved in phosphate import. The protein is Phosphate-binding protein PstS 2 (pstS2) of Mycobacterium tuberculosis (strain ATCC 25618 / H37Rv).